A 313-amino-acid chain; its full sequence is Ribosomal RNA small subunit methyltransferase H (313 aa).

S-adenosyl-L-methionine is bound by residues 35 to 37 (GGH), Asp55, Phe79, Asp101, and Gln108. A disordered region spans residues 276 to 300 (QGGPTLKSVGKMMPPDDEVADNPRA).

The protein belongs to the methyltransferase superfamily. RsmH family.

The protein localises to the cytoplasm. The enzyme catalyses cytidine(1402) in 16S rRNA + S-adenosyl-L-methionine = N(4)-methylcytidine(1402) in 16S rRNA + S-adenosyl-L-homocysteine + H(+). In terms of biological role, specifically methylates the N4 position of cytidine in position 1402 (C1402) of 16S rRNA. The chain is Ribosomal RNA small subunit methyltransferase H from Dickeya chrysanthemi (strain Ech1591) (Dickeya zeae (strain Ech1591)).